The sequence spans 182 residues: Adenylate kinase (182 aa).

Residue 12–17 participates in ATP binding; it reads GAGKGT. Residues 32 to 61 form an NMP region; it reads STGELLRKEIEMNTALGIQVKDIMNRGELV. Residues T33, R38, 59–61, 85–88, and Q92 contribute to the AMP site; these read ELV and GYPR. The LID stretch occupies residues 126–132; sequence LRGRKDD. Position 127 (R127) interacts with ATP. AMP contacts are provided by R129 and R140. R168 contributes to the ATP binding site.

The protein belongs to the adenylate kinase family. As to quaternary structure, monomer.

The protein resides in the cytoplasm. It catalyses the reaction AMP + ATP = 2 ADP. It functions in the pathway purine metabolism; AMP biosynthesis via salvage pathway; AMP from ADP: step 1/1. Functionally, catalyzes the reversible transfer of the terminal phosphate group between ATP and AMP. Plays an important role in cellular energy homeostasis and in adenine nucleotide metabolism. The sequence is that of Adenylate kinase from Prochlorococcus marinus (strain MIT 9301).